The chain runs to 238 residues: Ribonuclease PH (238 aa).

Phosphate is bound by residues R86 and 124 to 126 (GTR).

Belongs to the RNase PH family. As to quaternary structure, homohexameric ring arranged as a trimer of dimers.

It carries out the reaction tRNA(n+1) + phosphate = tRNA(n) + a ribonucleoside 5'-diphosphate. Its function is as follows. Phosphorolytic 3'-5' exoribonuclease that plays an important role in tRNA 3'-end maturation. Removes nucleotide residues following the 3'-CCA terminus of tRNAs; can also add nucleotides to the ends of RNA molecules by using nucleoside diphosphates as substrates, but this may not be physiologically important. Probably plays a role in initiation of 16S rRNA degradation (leading to ribosome degradation) during starvation. The polypeptide is Ribonuclease PH (Psychrobacter arcticus (strain DSM 17307 / VKM B-2377 / 273-4)).